The following is a 1069-amino-acid chain: Degenerin-like protein del-10 (1069 aa).

Residues 1-95 lie on the Cytoplasmic side of the membrane; sequence MVRMAERLAE…LNAASPVTRG (95 aa). The helical transmembrane segment at 96-116 threads the bilayer; that stretch reads LWCMIIIAFVILVLVQCYSQI. Residues 117–830 are Extracellular-facing; the sequence is KLYISEPVAT…FWSLACDIGG (714 aa). Residues asparagine 216, asparagine 290, asparagine 374, asparagine 454, asparagine 539, asparagine 545, and asparagine 584 are each glycosylated (N-linked (GlcNAc...) asparagine). The helical transmembrane segment at 831–851 threads the bilayer; that stretch reads ALGLFLGASLLTIIEIVYLCI. The Cytoplasmic segment spans residues 852-1069; sequence QYGLCGKRAR…EEDDDKHSYV (218 aa). Disordered stretches follow at residues 898–948 and 960–1069; these read KKSQ…TLTP and RNSQ…HSYV. Over residues 915 to 928 the composition is skewed to basic and acidic residues; sequence GDKFRSRASSEESK. The segment covering 938 to 948 has biased composition (polar residues); sequence NDPSGNSTLTP. A compositionally biased stretch (basic and acidic residues) spans 967 to 978; the sequence is YHDDHHPEDHYY.

This sequence belongs to the amiloride-sensitive sodium channel (TC 1.A.6) family.

The protein localises to the membrane. The protein is Degenerin-like protein del-10 of Caenorhabditis elegans.